A 192-amino-acid polypeptide reads, in one-letter code: Protein GrpE (192 aa).

The protein belongs to the GrpE family. Homodimer.

It is found in the cytoplasm. Its function is as follows. Participates actively in the response to hyperosmotic and heat shock by preventing the aggregation of stress-denatured proteins, in association with DnaK and GrpE. It is the nucleotide exchange factor for DnaK and may function as a thermosensor. Unfolded proteins bind initially to DnaJ; upon interaction with the DnaJ-bound protein, DnaK hydrolyzes its bound ATP, resulting in the formation of a stable complex. GrpE releases ADP from DnaK; ATP binding to DnaK triggers the release of the substrate protein, thus completing the reaction cycle. Several rounds of ATP-dependent interactions between DnaJ, DnaK and GrpE are required for fully efficient folding. In Neisseria gonorrhoeae (strain ATCC 700825 / FA 1090), this protein is Protein GrpE.